Reading from the N-terminus, the 153-residue chain is SsrA-binding protein (153 aa).

The protein belongs to the SmpB family.

It is found in the cytoplasm. Required for rescue of stalled ribosomes mediated by trans-translation. Binds to transfer-messenger RNA (tmRNA), required for stable association of tmRNA with ribosomes. tmRNA and SmpB together mimic tRNA shape, replacing the anticodon stem-loop with SmpB. tmRNA is encoded by the ssrA gene; the 2 termini fold to resemble tRNA(Ala) and it encodes a 'tag peptide', a short internal open reading frame. During trans-translation Ala-aminoacylated tmRNA acts like a tRNA, entering the A-site of stalled ribosomes, displacing the stalled mRNA. The ribosome then switches to translate the ORF on the tmRNA; the nascent peptide is terminated with the 'tag peptide' encoded by the tmRNA and targeted for degradation. The ribosome is freed to recommence translation, which seems to be the essential function of trans-translation. The sequence is that of SsrA-binding protein from Lactobacillus delbrueckii subsp. bulgaricus (strain ATCC 11842 / DSM 20081 / BCRC 10696 / JCM 1002 / NBRC 13953 / NCIMB 11778 / NCTC 12712 / WDCM 00102 / Lb 14).